The following is a 125-amino-acid chain: Succinate dehydrogenase cytochrome b560 subunit (125 aa).

The next 3 helical transmembrane spans lie at 29–49 (ISGV…KLAT), 68–88 (ILPW…INGI), and 104–124 (IIKD…FKFI). His-83 contacts heme.

This sequence belongs to the cytochrome b560 family. In terms of assembly, forms part of complex II containing four subunits: a 70 kDa flavoprotein (FP), a 27 kDa iron-sulfur protein (IP), a cytochrome B and a membrane-anchoring protein. It depends on heme as a cofactor.

It is found in the mitochondrion inner membrane. It functions in the pathway carbohydrate metabolism; tricarboxylic acid cycle. In terms of biological role, membrane-anchoring subunit of succinate dehydrogenase (SDH) that is involved in complex II of the mitochondrial electron transport chain and is responsible for transferring electrons from succinate to ubiquinone (coenzyme Q). The sequence is that of Succinate dehydrogenase cytochrome b560 subunit (SDH3) from Porphyra purpurea (Red seaweed).